The primary structure comprises 172 residues: Large ribosomal subunit protein uL10 (172 aa).

The protein belongs to the universal ribosomal protein uL10 family. Part of the ribosomal stalk of the 50S ribosomal subunit. The N-terminus interacts with L11 and the large rRNA to form the base of the stalk. The C-terminus forms an elongated spine to which L12 dimers bind in a sequential fashion forming a multimeric L10(L12)X complex.

Its function is as follows. Forms part of the ribosomal stalk, playing a central role in the interaction of the ribosome with GTP-bound translation factors. The chain is Large ribosomal subunit protein uL10 from Chlorobium phaeobacteroides (strain DSM 266 / SMG 266 / 2430).